The primary structure comprises 598 residues: Urease subunit alpha (598 aa).

The 463-residue stretch at 136–598 (GGLDTHVHWL…APLAQRYFLF (463 aa)) folds into the Urease domain. His141, His143, and Lys223 together coordinate Ni(2+). Lys223 is subject to N6-carboxylysine. His225 serves as a coordination point for substrate. Positions 252 and 278 each coordinate Ni(2+). His326 acts as the Proton donor in catalysis. Residue Asp366 coordinates Ni(2+).

This sequence belongs to the metallo-dependent hydrolases superfamily. Urease alpha subunit family. In terms of assembly, heterotrimer of UreA (gamma), UreB (beta) and UreC (alpha) subunits. Three heterotrimers associate to form the active enzyme. Ni cation serves as cofactor. Post-translationally, carboxylation allows a single lysine to coordinate two nickel ions.

Its subcellular location is the cytoplasm. It carries out the reaction urea + 2 H2O + H(+) = hydrogencarbonate + 2 NH4(+). Its pathway is nitrogen metabolism; urea degradation; CO(2) and NH(3) from urea (urease route): step 1/1. The protein is Urease subunit alpha of Ureaplasma urealyticum serovar 10 (strain ATCC 33699 / Western).